The following is a 1037-amino-acid chain: Ribonuclease E (1037 aa).

Disordered regions lie at residues 1-23, 47-90, and 106-369; these read MAEDAHTEDLSTQTPQQEGLPER, FDGR…ETPV, and VSEA…PILS. Basic and acidic residues predominate over residues 47-67; sequence FDGRQRSAHSTVDKADAERVR. Composition is skewed to low complexity over residues 68-90 and 106-126; these read AALTESPAAETPPEEAPAAETPV and VSEAGPAEPAEPAEPEAPAAE. Acidic residues-rich tracts occupy residues 127 to 141 and 196 to 226; these read AEAEAETEVADEAET and VVDDEDEDDDTETGAESDFDSGADSDSDDDQ. Positions 230–242 are enriched in basic residues; that stretch reads PRRRRRGRRGRGR. Residues 248–284 are compositionally biased toward acidic residues; the sequence is NDDATSDADTDSTEDQTDGDEQESGEDSDDSGDEDST. Over residues 291–301 the composition is skewed to basic residues; sequence RRRRRRRRRKS. Residues 320-335 are compositionally biased toward basic and acidic residues; the sequence is VHERAPRTERSDKSDD. Positions 427–504 constitute an S1 motif domain; the sequence is GNIYLGIVQN…GHKGARLTTQ (78 aa). A coiled-coil region spans residues 561–589; sequence EDIRSDVERLQKRWSEIEAKAAEVTEKKA. Residues Asp694 and Asp738 each contribute to the Mg(2+) site. Positions 796 and 799 each coordinate Zn(2+). The segment at 810–1037 is disordered; the sequence is PIDSASSNGG…ARPAGPPSHD (228 aa). Positions 834 to 843 are enriched in basic residues; it reads RRGKRGKKGA. Over residues 844 to 864 the composition is skewed to basic and acidic residues; that stretch reads ARTEEVHVAKVPDHTPGEHPM. Acidic residues predominate over residues 879–891; sequence EDHEDHEDHETAE. Positions 897–913 are enriched in basic and acidic residues; it reads EVRDDTRDEHDADERAH. The span at 923–1006 shows a compositional bias: acidic residues; sequence GDEDLDDSDE…DSDSDEDEEP (84 aa).

The protein belongs to the RNase E/G family. Assembles into a homotetramer formed by a dimer of dimers. Interacts with DNA-binding protein HhupB. Requires Mg(2+) as cofactor. Zn(2+) serves as cofactor.

It localises to the cytoplasm. It carries out the reaction Endonucleolytic cleavage of single-stranded RNA in A- and U-rich regions.. Endoribonuclease that plays a central role in RNA processing and decay. Plays a major role in pre-16S rRNA maturation, probably generating the mature 5'-end, and a minor role in pre-5S and pre-23S rRNA maturation. Probably also processes tRNA. RNase E and HupB jointly contribute to cellular adaptation to changing growth conditions and survival during antibiotic treatment. Overexpression or depletion leads to changes in gene expression; overexpression induces metabolic slowdown and cell stress while depleted strains grow less well than induced strains. The sequence is that of Ribonuclease E (rne) from Mycolicibacterium smegmatis (strain ATCC 700084 / mc(2)155) (Mycobacterium smegmatis).